The following is a 1069-amino-acid chain: RE1-silencing transcription factor (1069 aa).

The segment at Asp32 to Gln121 is interaction with SIN3A. Residues Ala43–Glu57 form an interaction with SIN3B region. The interval Ser85–Gly104 is disordered. The interval Pro144–Lys417 is interaction with ZFP90. The segment at Phe158 to His180 adopts a C2H2-type 1 zinc-finger fold. Positions Ser200–Ser211 are required for binding to the neuron-restrictive silencer element. C2H2-type zinc fingers lie at residues Ile215 to His237, Tyr247 to His269, Tyr275 to His297, Tyr303 to His325, Phe331 to His354, Leu360 to His382, and Phe388 to His411. Disordered stretches follow at residues Lys425 to Pro737 and Lys830 to Gly1022. A compositionally biased stretch (basic and acidic residues) spans Glu451 to Pro482. The span at Ser484–Thr493 shows a compositional bias: polar residues. Composition is skewed to basic and acidic residues over residues Ser498–Asp511 and Glu554–Lys576. Basic residues predominate over residues Lys584 to Ser600. Residues Ala630–Ser643 are compositionally biased toward polar residues. Composition is skewed to pro residues over residues Pro679–Met706 and Pro713–Met734. 2 stretches are compositionally biased toward basic and acidic residues: residues Arg851–Glu860 and Gly876–Ala886. A compositionally biased stretch (low complexity) spans Ser894–Ser904. Residues Thr930–Ala943 are compositionally biased toward basic and acidic residues. Ser948 carries the phosphoserine modification. A compositionally biased stretch (low complexity) spans Glu957–Pro968. The interval Glu981–Tyr1059 is interaction with RCOR1. The segment at Phe1032 to His1054 adopts a C2H2-type 9 zinc-finger fold.

As to quaternary structure, isoform 1 and isoform 6 form heterodimers. Isoform 6: Forms homodimers and homooligomers; binds to the neuron-restrictive silencer element (NRSE) as monomer. Interacts with SIN3A, SIN3B and RCOR1. Interacts with CDYL. Interacts with EHMT1 and EHMT2 only in the presence of CDYL. Part of a complex containing at least CDYL, REST, WIZ, SETB1, EHMT1 and EHMT2. Interacts (via zinc-finger DNA-binding domain) with ZFP90 (via N- and C-termini); the interaction inhibits REST repressor activity. Interacts (via C2H2-type zinc finger 5) with PRICKLE1. Interacts with FBXW11 and BTRC. Interacts with USP7. Post-translationally, O-glycosylated. In terms of processing, phosphorylated; phosphorylation is required for ubiquitination. Ubiquitinated; ubiquitination is mediated by BTRC and leads to proteasomal degradation in G2 phase. Ubiquitination increases during neuronal differentiation. Deubiquitinated by USP7; leading to its stabilization and promoting the maintenance of neural progenitor cells. Expressed in the hippocampus including the granule cell layer of the dentate gyrus, the pyramidal cell layers of CA1 and CA3, the apical and basilar dendrite layers of the stratum radiatum and stratum oriens of CA1, the stratum lucidum and stratum oriens of CA3 and in astroglia (at protein level). Expressed in the brain, with the highest levels in the neurons of hippocampus, pons/medulla and midbrain.

The protein localises to the nucleus. It is found in the cytoplasm. Functionally, transcriptional repressor which binds neuron-restrictive silencer element (NRSE) and represses neuronal gene transcription in non-neuronal cells. Restricts the expression of neuronal genes by associating with two distinct corepressors, SIN3A and RCOR1, which in turn recruit histone deacetylase to the promoters of REST-regulated genes. Mediates repression by recruiting the BHC complex at RE1/NRSE sites which acts by deacetylating and demethylating specific sites on histones, thereby acting as a chromatin modifier. Transcriptional repression by REST-CDYL via the recruitment of histone methyltransferase EHMT2 may be important in transformation suppression. Represses the expression of SRRM4 in non-neural cells to prevent the activation of neural-specific splicing events and to prevent production of REST isoform 6. Repressor activity may be inhibited by forming heterodimers with isoform 6, thereby preventing binding to NRSE or binding to corepressors and leading to derepression of target genes. Also maintains repression of neuronal genes in neural stem cells, and allows transcription and differentiation into neurons by dissociation from RE1/NRSE sites of target genes. Thereby is involved in maintaining the quiescent state of adult hippocampal neural stem cells and preventing premature differentiation into mature neurons. Plays a role in the developmental switch in synaptic NMDA receptor composition during postnatal development, by repressing GRIN2B expression and thereby altering NMDA receptor properties from containing primarily GRIN2B to primarily GRIN2A subunits. Acts as a regulator of osteoblast differentiation. Key repressor of gene expression in hypoxia; represses genes in hypoxia by direct binding to an RE1/NRSE site on their promoter regions. May also function in stress resistance in the brain during aging; possibly by regulating expression of genes involved in cell death and in the stress response. Repressor of gene expression in the hippocampus after ischemia by directly binding to RE1/NRSE sites and recruiting SIN3A and RCOR1 to promoters of target genes, thereby promoting changes in chromatin modifications and ischemia-induced cell death. After ischemia, might play a role in repression of miR-132 expression in hippocampal neurons, thereby leading to neuronal cell death. In terms of biological role, binds to the 3' region of the neuron-restrictive silencer element (NRSE), with lower affinity than full-length REST isoform 1. Exhibits weaker repressor activity compared to isoform 1. May negatively regulate the repressor activity of isoform 1 by binding to isoform 1, thereby preventing its binding to NRSE and leading to derepression of target genes. However, in another study, does not appear to be implicated in repressor activity of a NRSE motif-containing reporter construct nor in inhibitory activity on the isoform 1 transcriptional repressor activity. Post-transcriptional inactivation of REST by SRRM4-dependent alternative splicing into isoform 6 is required in mechanosensory hair cells in the inner ear for derepression of neuronal genes and hearing. This is RE1-silencing transcription factor (Rest) from Rattus norvegicus (Rat).